A 210-amino-acid polypeptide reads, in one-letter code: uncharacterized protein (210 aa).

The 177-residue stretch at 4-180 (RKVYLYVFHT…AVEVLKKLDV (177 aa)) folds into the PfpI endopeptidase domain. Cys110 serves as the catalytic Nucleophile.

It belongs to the peptidase C56 family.

This is an uncharacterized protein from Bacillus subtilis (strain 168).